A 254-amino-acid polypeptide reads, in one-letter code: Ribonuclease HII (254 aa).

The 189-residue stretch at 46–234 (KLIAGIDEVG…VWMASAPQEV (189 aa)) folds into the RNase H type-2 domain. A divalent metal cation contacts are provided by Asp-52, Glu-53, and Asp-144.

The protein belongs to the RNase HII family. The cofactor is Mn(2+). Mg(2+) is required as a cofactor.

It is found in the cytoplasm. The catalysed reaction is Endonucleolytic cleavage to 5'-phosphomonoester.. Endonuclease that specifically degrades the RNA of RNA-DNA hybrids. In Koribacter versatilis (strain Ellin345), this protein is Ribonuclease HII.